Reading from the N-terminus, the 93-residue chain is Putative membrane protein insertion efficiency factor (93 aa).

Belongs to the UPF0161 family.

Its subcellular location is the cell inner membrane. Could be involved in insertion of integral membrane proteins into the membrane. The polypeptide is Putative membrane protein insertion efficiency factor (Cupriavidus taiwanensis (strain DSM 17343 / BCRC 17206 / CCUG 44338 / CIP 107171 / LMG 19424 / R1) (Ralstonia taiwanensis (strain LMG 19424))).